A 111-amino-acid polypeptide reads, in one-letter code: uncharacterized protein (111 aa).

This sequence to M.tuberculosis Rv1271c.

This is an uncharacterized protein from Mycobacterium bovis (strain ATCC BAA-935 / AF2122/97).